A 261-amino-acid polypeptide reads, in one-letter code: MTHQTHAYHMVNPSPWPLTGALSALLMTSGLTMWFHYNSTILLMLGLTTNMLTMYQWWRDIIRESTFQGHHTPTVQKGLRYGMILFIISEVLFFTGFFWAFYHSSLAPTPELGGCWPPTGIHPLNPLEVPLLNTSVLLASGVSITWAHHSLMEGDRNHMLQALFITIALGIYFTLLQASEYYEAPFTISDGVYGSTFFVATGFHGLHVIIGSTFLIVCFFRQLKFHFTSSHHFGFEAAAWYWHFVDVVWLFLYVSIYWWGS.

Residues 1 to 15 (MTHQTHAYHMVNPSP) are Mitochondrial matrix-facing. A helical transmembrane segment spans residues 16–34 (WPLTGALSALLMTSGLTMW). Over 35–40 (FHYNST) the chain is Mitochondrial intermembrane. A helical membrane pass occupies residues 41–66 (ILLMLGLTTNMLTMYQWWRDIIREST). Topologically, residues 67–72 (FQGHHT) are mitochondrial matrix. Residues 73–105 (PTVQKGLRYGMILFIISEVLFFTGFFWAFYHSS) traverse the membrane as a helical segment. The Mitochondrial intermembrane portion of the chain corresponds to 106-128 (LAPTPELGGCWPPTGIHPLNPLE). A helical membrane pass occupies residues 129 to 152 (VPLLNTSVLLASGVSITWAHHSLM). The Mitochondrial matrix segment spans residues 153–155 (EGD). Residues 156–183 (RNHMLQALFITIALGIYFTLLQASEYYE) form a helical membrane-spanning segment. Residues 184-190 (APFTISD) lie on the Mitochondrial intermembrane side of the membrane. Residues 191 to 223 (GVYGSTFFVATGFHGLHVIIGSTFLIVCFFRQL) traverse the membrane as a helical segment. Over 224–232 (KFHFTSSHH) the chain is Mitochondrial matrix. A helical membrane pass occupies residues 233-256 (FGFEAAAWYWHFVDVVWLFLYVSI). The Mitochondrial intermembrane portion of the chain corresponds to 257 to 261 (YWWGS).

The protein belongs to the cytochrome c oxidase subunit 3 family. As to quaternary structure, component of the cytochrome c oxidase (complex IV, CIV), a multisubunit enzyme composed of 14 subunits. The complex is composed of a catalytic core of 3 subunits MT-CO1, MT-CO2 and MT-CO3, encoded in the mitochondrial DNA, and 11 supernumerary subunits COX4I, COX5A, COX5B, COX6A, COX6B, COX6C, COX7A, COX7B, COX7C, COX8 and NDUFA4, which are encoded in the nuclear genome. The complex exists as a monomer or a dimer and forms supercomplexes (SCs) in the inner mitochondrial membrane with NADH-ubiquinone oxidoreductase (complex I, CI) and ubiquinol-cytochrome c oxidoreductase (cytochrome b-c1 complex, complex III, CIII), resulting in different assemblies (supercomplex SCI(1)III(2)IV(1) and megacomplex MCI(2)III(2)IV(2)).

It is found in the mitochondrion inner membrane. The enzyme catalyses 4 Fe(II)-[cytochrome c] + O2 + 8 H(+)(in) = 4 Fe(III)-[cytochrome c] + 2 H2O + 4 H(+)(out). Its function is as follows. Component of the cytochrome c oxidase, the last enzyme in the mitochondrial electron transport chain which drives oxidative phosphorylation. The respiratory chain contains 3 multisubunit complexes succinate dehydrogenase (complex II, CII), ubiquinol-cytochrome c oxidoreductase (cytochrome b-c1 complex, complex III, CIII) and cytochrome c oxidase (complex IV, CIV), that cooperate to transfer electrons derived from NADH and succinate to molecular oxygen, creating an electrochemical gradient over the inner membrane that drives transmembrane transport and the ATP synthase. Cytochrome c oxidase is the component of the respiratory chain that catalyzes the reduction of oxygen to water. Electrons originating from reduced cytochrome c in the intermembrane space (IMS) are transferred via the dinuclear copper A center (CU(A)) of subunit 2 and heme A of subunit 1 to the active site in subunit 1, a binuclear center (BNC) formed by heme A3 and copper B (CU(B)). The BNC reduces molecular oxygen to 2 water molecules using 4 electrons from cytochrome c in the IMS and 4 protons from the mitochondrial matrix. The polypeptide is Cytochrome c oxidase subunit 3 (MT-CO3) (Tragelaphus imberbis (Lesser kudu)).